A 741-amino-acid chain; its full sequence is Alpha-1,6-mannosylglycoprotein 6-beta-N-acetylglucosaminyltransferase A (741 aa).

Residues 1 to 13 (MALFTPWKLSSQK) lie on the Cytoplasmic side of the membrane. The chain crosses the membrane as a helical; Signal-anchor for type II membrane protein span at residues 14–30 (LGFFLVTFGFIWGMMLL). Topologically, residues 31 to 741 (HFTIQQRTQP…GQVALCKDCL (711 aa)) are lumenal. Residues Asn-110, Asn-115, and Asn-118 are each glycosylated (N-linked (GlcNAc...) asparagine). 9 disulfide bridges follow: Cys-145/Cys-183, Cys-156/Cys-196, Cys-172/Cys-338, Cys-372/Cys-626, Cys-649/Cys-724, Cys-653/Cys-726, Cys-660/Cys-713, Cys-681/Cys-702, and Cys-737/Cys-740. A sufficient for catalytic activity region spans residues 213-741 (NSLAEIRTDF…GQVALCKDCL (529 aa)). The important for activity in FGF2 release stretch occupies residues 264 to 269 (KRKRKK). A glycan (N-linked (GlcNAc...) asparagine) is linked at Asn-334. Residue 378-379 (DS) coordinates substrate. N-linked (GlcNAc...) asparagine glycosylation is found at Asn-433 and Asn-447. Glu-526 lines the UDP-N-acetyl-alpha-D-glucosamine pocket. Lys-554 contributes to the substrate binding site.

This sequence belongs to the glycosyltransferase 18 family. In terms of processing, N-glycosylated. A secreted form is released from the membrane after cleavage by gamma-secretase.

It localises to the golgi apparatus membrane. It is found in the secreted. The catalysed reaction is N(4)-{beta-D-GlcNAc-(1-&gt;2)-[beta-D-GlcNAc-(1-&gt;4)]-alpha-D-Man-(1-&gt;3)-[beta-D-GlcNAc-(1-&gt;2)-alpha-D-Man-(1-&gt;6)]-beta-D-Man-(1-&gt;4)-beta-D-GlcNAc-(1-&gt;4)-beta-D-GlcNAc}-L-asparaginyl-[protein] + UDP-N-acetyl-alpha-D-glucosamine = N(4)-{beta-D-GlcNAc-(1-&gt;2)-[beta-D-GlcNAc-(1-&gt;4)]-alpha-D-Man-(1-&gt;3)-[beta-D-GlcNAc-(1-&gt;2)-[beta-D-GlcNAc-(1-&gt;6)]-alpha-D-Man-(1-&gt;6)]-beta-D-Man-(1-&gt;4)-beta-D-GlcNAc-(1-&gt;4)-beta-D-GlcNAc}-L-asparaginyl-[protein] + UDP + H(+). It participates in protein modification; protein glycosylation. Its activity is regulated as follows. Activity is increased by Mn(2+) and Mg(2+). Functionally, catalyzes the addition of N-acetylglucosamine (GlcNAc) in beta 1-6 linkage to the alpha-linked mannose of biantennary N-linked oligosaccharides. Catalyzes an important step in the biosynthesis of branched, complex-type N-glycans, such as those found on EGFR, TGFR (TGF-beta receptor) and CDH2. Via its role in the biosynthesis of complex N-glycans, plays an important role in the activation of cellular signaling pathways, reorganization of the actin cytoskeleton, cell-cell adhesion and cell migration. MGAT5-dependent EGFR N-glycosylation enhances the interaction between EGFR and LGALS3 and thereby prevents rapid EGFR endocytosis and prolongs EGFR signaling. Required for efficient interaction between TGFB1 and its receptor. Enhances activation of intracellular signaling pathways by several types of growth factors, including FGF2, PDGF, IGF, TGFB1 and EGF. MGAT5-dependent CDH2 N-glycosylation inhibits CDH2-mediated homotypic cell-cell adhesion and contributes to the regulation of downstream signaling pathways. Promotes cell migration. Contributes to the regulation of the inflammatory response. MGAT5-dependent TCR N-glycosylation enhances the interaction between TCR and LGALS3, limits agonist-induced TCR clustering, and thereby dampens TCR-mediated responses to antigens. Required for normal leukocyte evasation and accumulation at sites of inflammation. Inhibits attachment of monocytes to the vascular endothelium and subsequent monocyte diapedesis. Its function is as follows. Promotes proliferation of umbilical vein endothelial cells and angiogenesis, at least in part by promoting the release of the growth factor FGF2 from the extracellular matrix. The protein is Alpha-1,6-mannosylglycoprotein 6-beta-N-acetylglucosaminyltransferase A (MGAT5) of Homo sapiens (Human).